Consider the following 526-residue polypeptide: Probable carboxypeptidase 2 (526 aa).

Residues methionine 1–alanine 21 form the signal peptide. N-linked (GlcNAc...) asparagine glycosylation is present at asparagine 46. The tract at residues proline 53–glutamate 76 is disordered. Residues glycine 71–alanine 351 enclose the Peptidase M14 domain. Asparagine 116 carries an N-linked (GlcNAc...) asparagine glycan. Zn(2+)-binding residues include histidine 136, glutamate 139, and histidine 224. The active-site Proton donor/acceptor is the glutamate 322. N-linked (GlcNAc...) asparagine glycosylation is found at asparagine 393 and asparagine 459.

This sequence belongs to the peptidase M14 family. It depends on Zn(2+) as a cofactor.

It localises to the secreted. Functionally, extracellular metalloprotease that contributes to pathogenicity. The protein is Probable carboxypeptidase 2 (MCPB) of Arthroderma benhamiae (strain ATCC MYA-4681 / CBS 112371) (Trichophyton mentagrophytes).